The primary structure comprises 363 residues: Disease resistance protein RBA1 (363 aa).

The region spanning 12 to 175 (PVPKVFLSFR…EIVKEVERVL (164 aa)) is the TIR domain. Residues 21-26 (RGEEIR) and G53 each bind NAD(+). Residue E86 is part of the active site.

Homooligomer; homooligomerization is required for activity.

The protein resides in the cytoplasm. It localises to the nucleus. Its subcellular location is the nucleoplasm. The enzyme catalyses NAD(+) + H2O = ADP-D-ribose + nicotinamide + H(+). It catalyses the reaction NADP(+) + H2O = ADP-D-ribose 2'-phosphate + nicotinamide + H(+). Its function is as follows. Disease resistance (R) protein that specifically recognizes the HopBA1 type III effector protein from P.syringae, and triggers cell death. Acts as a NAD(+) hydrolase (NADase): in response to pathogen-recognition, catalyzes cleavage of NAD(+) into ADP-D-ribose (ADPR) and nicotinamide; NAD(+) cleavage triggering a defense system that promotes cell death. In addition to ADPR, also generates a cyclization variant of cyclic ADPR (cADPR), termed v-cADPR, for which the cyclizing bond is unknown. Also able to hydrolyze NADP(+), but not other NAD(+)-related molecules. The polypeptide is Disease resistance protein RBA1 (Arabidopsis thaliana (Mouse-ear cress)).